The sequence spans 154 residues: Myoglobin (154 aa).

Positions G2–K148 constitute a Globin domain. Phosphoserine is present on S4. A nitrite-binding site is contributed by H65. H65 lines the O2 pocket. Residues T68 and T75 each carry the phosphothreonine modification. H94 provides a ligand contact to heme b. S121 carries the post-translational modification Phosphoserine.

The protein belongs to the globin family. Monomeric.

It is found in the cytoplasm. Its subcellular location is the sarcoplasm. It catalyses the reaction Fe(III)-heme b-[protein] + nitric oxide + H2O = Fe(II)-heme b-[protein] + nitrite + 2 H(+). The enzyme catalyses H2O2 + AH2 = A + 2 H2O. Its function is as follows. Monomeric heme protein which primary function is to store oxygen and facilitate its diffusion within muscle tissues. Reversibly binds oxygen through a pentacoordinated heme iron and enables its timely and efficient release as needed during periods of heightened demand. Depending on the oxidative conditions of tissues and cells, and in addition to its ability to bind oxygen, it also has a nitrite reductase activity whereby it regulates the production of bioactive nitric oxide. Under stress conditions, like hypoxia and anoxia, it also protects cells against reactive oxygen species thanks to its pseudoperoxidase activity. This Mus musculus (Mouse) protein is Myoglobin.